We begin with the raw amino-acid sequence, 367 residues long: MSGSQTLVVKLGTSVLTGGSRRLNRAHIVELVRQCAQQHAKGHRIVIVTFGAIAAGREHLGYPELPATIASKQLLAAVGQSRLIQLWEQLFSIYGIHIGQMLLTRADLEDRERFLNARDTMNALLDNRIVPVINENDAVATAEIKVGDNDNLSALAAILASADKLLLLTDQAGLYTADPRNNPEAELIREVHGIDDVLRGMAGDSVSGLGTGGMATKLQAADVACRAGIDVVIAAGSQVGVIADVIDGTPVGTRFHSLETPLENRKRWIFGAPPAGEITVDDGAVFAIMERGSSLLPKGIRSVKGDFSRGEVIRIRNLNGRDLAHGVSRYNSDALRMLAGHHSQQISEILGYEYGPVAVHRDDMIVS.

Lys10 lines the ATP pocket. Residues Asp137 and Asn149 each coordinate substrate. ATP-binding positions include 169–170 (TD) and 211–217 (TGGMATK). A PUA domain is found at 275 to 353 (AGEITVDDGA…QQISEILGYE (79 aa)).

It belongs to the glutamate 5-kinase family.

The protein resides in the cytoplasm. It catalyses the reaction L-glutamate + ATP = L-glutamyl 5-phosphate + ADP. It functions in the pathway amino-acid biosynthesis; L-proline biosynthesis; L-glutamate 5-semialdehyde from L-glutamate: step 1/2. In terms of biological role, catalyzes the transfer of a phosphate group to glutamate to form L-glutamate 5-phosphate. The chain is Glutamate 5-kinase from Yersinia pestis bv. Antiqua (strain Antiqua).